The following is a 263-amino-acid chain: 4-hydroxy-2-oxo-heptane-1,7-dioate aldolase (263 aa).

His-45 functions as the Proton acceptor in the catalytic mechanism. Gln-147 provides a ligand contact to substrate. Residue Glu-149 participates in a divalent metal cation binding. Substrate is bound by residues Ala-174 and Asp-175. Position 175 (Asp-175) interacts with a divalent metal cation.

The protein belongs to the HpcH/HpaI aldolase family. In terms of assembly, homohexamer; trimer of dimers. A divalent metal cation is required as a cofactor.

It catalyses the reaction 4-hydroxy-2-oxoheptanedioate = succinate semialdehyde + pyruvate. It participates in aromatic compound metabolism; 4-hydroxyphenylacetate degradation; pyruvate and succinate semialdehyde from 4-hydroxyphenylacetate: step 7/7. Its function is as follows. Catalyzes the reversible retro-aldol cleavage of 4-hydroxy-2-ketoheptane-1,7-dioate (HKHD) to pyruvate and succinic semialdehyde. This is 4-hydroxy-2-oxo-heptane-1,7-dioate aldolase from Salmonella enteritidis PT4 (strain P125109).